A 630-amino-acid chain; its full sequence is Replication protein A 70 kDa DNA-binding subunit B (630 aa).

The OB DNA-binding region spans 200–282; the sequence is IIKVRVTSKG…KTVHNDYEMT (83 aa). The segment at 496–516 adopts a C4-type zinc-finger fold; that stretch reads CKTCNKKVTEAIGSGYWCEGC.

The protein belongs to the replication factor A protein 1 family. Heterotrimer of RPA1, RPA2 and RPA3 (canonical replication protein A complex). Interacts with RPA2A. In terms of tissue distribution, expressed in root tips, roots, shoot apical meristem (SAM) and young leaves, and at lower levels in mature leaves, flag leaves and ears.

The protein localises to the nucleus. Its function is as follows. Component of the replication protein A complex (RPA) required for DNA recombination, repair and replication. The activity of RPA is mediated by single-stranded DNA binding and protein interactions. Probably involved in repair of double-strand DNA breaks (DSBs) induced by genotoxic stresses. This Oryza sativa subsp. japonica (Rice) protein is Replication protein A 70 kDa DNA-binding subunit B (RPA1B).